The sequence spans 460 residues: Mogroside I-E synthase (460 aa).

The active-site Proton acceptor is His25. Residue Asp114 is the Charge relay of the active site. UDP-alpha-D-glucose-binding residues include Ser286, Cys339, Gln341, Trp359, Asn360, Ser361, Glu364, Asp380, and Gln381.

The protein belongs to the UDP-glycosyltransferase family. In terms of tissue distribution, highly expressed in young fruits 15 days after anthesis (15-DAA).

The enzyme catalyses mogrol + UDP-alpha-D-glucose = mogroside IE + UDP + H(+). It carries out the reaction mogroside I-A1 + UDP-alpha-D-glucose = mogroside IIE + UDP + H(+). The catalysed reaction is mogroside II-A1 + UDP-alpha-D-glucose = mogroside IIIX + UDP + H(+). It catalyses the reaction mogroside II-A + UDP-alpha-D-glucose = mogroside III + UDP + H(+). The enzyme catalyses mogroside III-A1 + UDP-alpha-D-glucose = siamenoside I + UDP + H(+). It functions in the pathway secondary metabolite biosynthesis; terpenoid biosynthesis. UDP-glycosyltransferase involved in the biosynthesis of cucurbitacin and mogroside tetracyclic triterpene natural products (e.g. siamenoside I and mogrosides IV, V and VI). Cucurbitacins have cytotoxic properties and exhibit deterrent taste as a defense barrier against herbivores. Mogrosides are nonsugar highly oxygenated compounds used as high-intensity zero-calorie sweeteners; they also possess pharmacological properties such as regulating immunity, lowering blood sugar and lipid levels, protecting the liver, and acting as antioxidants and antitumor agents. Catalyzes the C3 primary glucosylation of mogrol, mogroside I-A1, mogroside II-A1, mogroside II-A and mogroside III-A1. The sequence is that of Mogroside I-E synthase from Siraitia grosvenorii (Monk's fruit).